An 876-amino-acid polypeptide reads, in one-letter code: Alanine--tRNA ligase (876 aa).

Zn(2+)-binding residues include histidine 568, histidine 572, cysteine 670, and histidine 674.

Belongs to the class-II aminoacyl-tRNA synthetase family. The cofactor is Zn(2+).

Its subcellular location is the cytoplasm. The catalysed reaction is tRNA(Ala) + L-alanine + ATP = L-alanyl-tRNA(Ala) + AMP + diphosphate. In terms of biological role, catalyzes the attachment of alanine to tRNA(Ala) in a two-step reaction: alanine is first activated by ATP to form Ala-AMP and then transferred to the acceptor end of tRNA(Ala). Also edits incorrectly charged Ser-tRNA(Ala) and Gly-tRNA(Ala) via its editing domain. This chain is Alanine--tRNA ligase, found in Anaplasma phagocytophilum (strain HZ).